The primary structure comprises 751 residues: Diamine oxidase [copper-containing] (751 aa).

The signal sequence occupies residues 1–22 (MSLAFGWAAVILLLQTADTASA). Residues N61 and N110 are each glycosylated (N-linked (GlcNAc...) asparagine). D373 functions as the Proton acceptor in the catalytic mechanism. C391 and C417 are oxidised to a cystine. Y461 functions as the Schiff-base intermediate with substrate; via topaquinone in the catalytic mechanism. Y461 is modified (2',4',5'-topaquinone). Residues H510 and H512 each contribute to the Cu(2+) site. Positions 519, 520, and 521 each coordinate Ca(2+). An N-linked (GlcNAc...) asparagine glycan is attached at N538. E562, F653, N656, E658, D664, and L665 together coordinate Ca(2+). H675 is a binding site for Cu(2+). N745 is a glycosylation site (N-linked (GlcNAc...) asparagine).

It belongs to the copper/topaquinone oxidase family. In terms of assembly, homodimer; disulfide-linked. Cu(2+) serves as cofactor. The cofactor is Ca(2+). L-topaquinone is required as a cofactor. Post-translationally, topaquinone (TPQ) is generated by copper-dependent autoxidation of a specific tyrosyl residue. In terms of processing, N-glycosylated.

The protein resides in the secreted. The protein localises to the extracellular space. Its subcellular location is the cell membrane. The enzyme catalyses histamine + O2 + H2O = imidazole-4-acetaldehyde + H2O2 + NH4(+). The catalysed reaction is N(tau)-methylhistamine + O2 + H2O = 1-methylimidazole-4-acetaldehyde + H2O2 + NH4(+). It carries out the reaction putrescine + O2 + H2O = 4-aminobutanal + H2O2 + NH4(+). It catalyses the reaction cadaverine + O2 + H2O = 5-aminopentanal + H2O2 + NH4(+). Its activity is regulated as follows. Inhibited by amiloride and amiloride analogs. Catalyzes the oxidative deamination of primary amines to the corresponding aldehydes with the concomitant production of hydrogen peroxide and ammonia. Its preferred substrates in vitro are the diamines histamine and 1-methylhistamine and it could therefore play a role in allergic and immune responses. Has a broad specificity for diamines and can also act on cadaverine and putrescine, two products of amino acid catabolism. It could also act on polyamines, like spermidine and spermine though less efficiently, and regulate various biological processes. This chain is Diamine oxidase [copper-containing], found in Mus musculus (Mouse).